A 654-amino-acid chain; its full sequence is Arrestin domain-containing protein C (654 aa).

One can recognise a C2 domain in the interval 1-105 (MTQRSLKINI…AKRNLMDQWL (105 aa)). A coiled-coil region spans residues 616-647 (AKRIFLKIQQIQSERQKQQEQQEQQVVSNLEA).

The protein belongs to the arrestin family.

This is Arrestin domain-containing protein C (adcC) from Dictyostelium discoideum (Social amoeba).